The following is a 765-amino-acid chain: Palmitoyltransferase ZDHHC8 (765 aa).

Residues 1–13 (MPRSPGTRLKPAK) are Cytoplasmic-facing. The chain crosses the membrane as a helical span at residues 14-34 (YIPVATAAALLVGSSTLFFVF). Topologically, residues 35-52 (TCPWLTRAVSPAVPVYNG) are lumenal. A helical membrane pass occupies residues 53–73 (IIFLFVLANFSMATFMDPGVF). The Cytoplasmic portion of the chain corresponds to 74–148 (PRADEDEDKE…NCIGRRNYRY (75 aa)). The DHHC domain occupies 104 to 154 (KWCATCHFYRPPRCSHCSVCDNCVEDFDHHCPWVNNCIGRRNYRYFFLFLL). Cys-134 (S-palmitoyl cysteine intermediate) is an active-site residue. A helical transmembrane segment spans residues 149-169 (FFLFLLSLSAHMVGVVAFGLV). The Lumenal portion of the chain corresponds to 170–190 (YVLNHAEGLGAAHTTITMAVM). Residues 191-211 (CVAGLFFIPVIGLTGFHVVLV) form a helical membrane-spanning segment. The Cytoplasmic portion of the chain corresponds to 212–765 (TRGRTTNEQV…VGGTTYEISV (554 aa)). Residues 293 to 352 (GLGRSKSKGSLDRLDEKPLDLGPPLPPKIEAGTFSSDLQTPRPGSAESALSVQRTSPPTP) are disordered. Residues 301–311 (GSLDRLDEKPL) are compositionally biased toward basic and acidic residues. The residue at position 337 (Ser-337) is a Phosphoserine. At Arg-441 the chain carries Omega-N-methylarginine. Positions 509-540 (LHPGATGDPPRPLPRSFSPVLGPRPREPSPVR) are disordered. Residues Ser-606, Ser-627, Ser-675, Ser-682, Ser-725, and Ser-743 each carry the phosphoserine modification. The tract at residues 613-747 (GPGFGGARNP…PGPSASPTRH (135 aa)) is disordered. A compositionally biased stretch (low complexity) spans 622-653 (PALQTSLSSLSSSVSRAPRTSSSSLQADQASS).

The protein belongs to the DHHC palmitoyltransferase family. ERF2/ZDHHC9 subfamily. As to expression, widely expressed.

It localises to the golgi apparatus membrane. The protein localises to the mitochondrion membrane. The enzyme catalyses L-cysteinyl-[protein] + hexadecanoyl-CoA = S-hexadecanoyl-L-cysteinyl-[protein] + CoA. In terms of biological role, palmitoyltransferase that catalyzes the addition of palmitate onto various protein substrates and therefore functions in several unrelated biological processes. Through the palmitoylation of ABCA1 regulates the localization of the transporter to the plasma membrane and thereby regulates its function in cholesterol and phospholipid efflux. Could also pamitoylate the D(2) dopamine receptor DRD2 and regulate its stability and localization to the plasma membrane. Could also play a role in glutamatergic transmission. Functionally, (Microbial infection) Able to palmitoylate SARS coronavirus-2/SARS-CoV-2 spike protein following its synthesis in the endoplasmic reticulum (ER). In the infected cell, promotes spike biogenesis by protecting it from premature ER degradation, increases half-life and controls the lipid organization of its immediate membrane environment. Once the virus has formed, spike palmitoylation controls fusion with the target cell. The protein is Palmitoyltransferase ZDHHC8 of Homo sapiens (Human).